A 136-amino-acid polypeptide reads, in one-letter code: Heme-binding protein Rv0203 (136 aa).

The signal sequence occupies residues 1 to 27 (MKTGTATTRRRLLAVLIALALPGAAVA). Cys-41 and Cys-115 are oxidised to a cystine. The heme site is built by Tyr-60, His-64, and His-90.

As to quaternary structure, dimer of dimers.

It localises to the secreted. Part of a heme-iron acquisition system. Acts by binding heme and delivering it to the membrane proteins MmpL3 and MmpL11. Can use free heme or heme from host hemoglobin. The protein is Heme-binding protein Rv0203 of Mycobacterium tuberculosis (strain ATCC 25618 / H37Rv).